Consider the following 750-residue polypeptide: Photosystem I P700 chlorophyll a apoprotein A1 (750 aa).

8 helical membrane-spanning segments follow: residues 70-93, 156-179, 195-219, 291-309, 346-369, 385-411, 433-455, and 531-549; these read VFSA…FHGA, LYCT…FHYH, LNHH…HVSL, IAHH…GHMY, WHAQ…HHMY, LSLF…IFMV, AIIS…LYIH, and FLVH…LILL. Positions 573 and 582 each coordinate [4Fe-4S] cluster. Transmembrane regions (helical) follow at residues 589-610 and 664-686; these read HVFL…HFSW and LSAY…MFLF. H675 contacts chlorophyll a'. Chlorophyll a contacts are provided by M683 and Y691. W692 contacts phylloquinone. A helical transmembrane segment spans residues 724–744; the sequence is AVGVTHYLLGGIATTWAFFLA.

This sequence belongs to the PsaA/PsaB family. As to quaternary structure, the PsaA/B heterodimer binds the P700 chlorophyll special pair and subsequent electron acceptors. PSI consists of a core antenna complex that captures photons, and an electron transfer chain that converts photonic excitation into a charge separation. The eukaryotic PSI reaction center is composed of at least 11 subunits. P700 is a chlorophyll a/chlorophyll a' dimer, A0 is one or more chlorophyll a, A1 is one or both phylloquinones and FX is a shared 4Fe-4S iron-sulfur center. is required as a cofactor.

It localises to the plastid. The protein localises to the chloroplast thylakoid membrane. The catalysed reaction is reduced [plastocyanin] + hnu + oxidized [2Fe-2S]-[ferredoxin] = oxidized [plastocyanin] + reduced [2Fe-2S]-[ferredoxin]. Its function is as follows. PsaA and PsaB bind P700, the primary electron donor of photosystem I (PSI), as well as the electron acceptors A0, A1 and FX. PSI is a plastocyanin-ferredoxin oxidoreductase, converting photonic excitation into a charge separation, which transfers an electron from the donor P700 chlorophyll pair to the spectroscopically characterized acceptors A0, A1, FX, FA and FB in turn. Oxidized P700 is reduced on the lumenal side of the thylakoid membrane by plastocyanin. This chain is Photosystem I P700 chlorophyll a apoprotein A1, found in Panax ginseng (Korean ginseng).